The chain runs to 243 residues: Leucyl/phenylalanyl-tRNA--protein transferase (243 aa).

The protein belongs to the L/F-transferase family.

The protein localises to the cytoplasm. The enzyme catalyses N-terminal L-lysyl-[protein] + L-leucyl-tRNA(Leu) = N-terminal L-leucyl-L-lysyl-[protein] + tRNA(Leu) + H(+). The catalysed reaction is N-terminal L-arginyl-[protein] + L-leucyl-tRNA(Leu) = N-terminal L-leucyl-L-arginyl-[protein] + tRNA(Leu) + H(+). It catalyses the reaction L-phenylalanyl-tRNA(Phe) + an N-terminal L-alpha-aminoacyl-[protein] = an N-terminal L-phenylalanyl-L-alpha-aminoacyl-[protein] + tRNA(Phe). Functions in the N-end rule pathway of protein degradation where it conjugates Leu, Phe and, less efficiently, Met from aminoacyl-tRNAs to the N-termini of proteins containing an N-terminal arginine or lysine. This Saccharophagus degradans (strain 2-40 / ATCC 43961 / DSM 17024) protein is Leucyl/phenylalanyl-tRNA--protein transferase.